A 413-amino-acid chain; its full sequence is MIEELGLKVKTASKEAAKLSTAEKNTFLQKLADSLVENTDRIISENAKDLAKAKGHGISEIMVDRLRLTAQRISDMATGLRQVAELPDPIGQVLQGFTNLDGLKIVQKRVPLGTVGMIFESRPNVTIDAFSLCFKTGNSVLLRGGSDAIYSNMVLVEIIKENLLSAKITDGVVELLSDTSHAEAEKMMQADKFLDVLIPRGSARLINRVKEKATVPVIETGVGNCTIFVDESADLDMATRIVINAKTQRPSVCNAAESLVVHAKIADEFLPKLQNEINKVHEVEFRADERSLKALSAGIPATDEDFGMEFLDYILSVKTVDNLDEAIEHINTYSSRHSESIVTHDYFNAQKFQDEIDAAAVYVNASTRFTDGFVFGLGAEIGISTQKLHARGPMGLEALTSTKYLIDGCGQIR.

It belongs to the gamma-glutamyl phosphate reductase family.

Its subcellular location is the cytoplasm. The enzyme catalyses L-glutamate 5-semialdehyde + phosphate + NADP(+) = L-glutamyl 5-phosphate + NADPH + H(+). It participates in amino-acid biosynthesis; L-proline biosynthesis; L-glutamate 5-semialdehyde from L-glutamate: step 2/2. Functionally, catalyzes the NADPH-dependent reduction of L-glutamate 5-phosphate into L-glutamate 5-semialdehyde and phosphate. The product spontaneously undergoes cyclization to form 1-pyrroline-5-carboxylate. This chain is Gamma-glutamyl phosphate reductase, found in Lactococcus lactis subsp. cremoris (strain MG1363).